Here is a 312-residue protein sequence, read N- to C-terminus: DNA-directed RNA polymerase subunit alpha (312 aa).

Residues methionine 1 to lysine 227 form an alpha N-terminal domain (alpha-NTD) region. The tract at residues proline 243–asparagine 312 is alpha C-terminal domain (alpha-CTD).

This sequence belongs to the RNA polymerase alpha chain family. As to quaternary structure, in plastids the minimal PEP RNA polymerase catalytic core is composed of four subunits: alpha, beta, beta', and beta''. When a (nuclear-encoded) sigma factor is associated with the core the holoenzyme is formed, which can initiate transcription.

It is found in the plastid. The protein resides in the chloroplast. It carries out the reaction RNA(n) + a ribonucleoside 5'-triphosphate = RNA(n+1) + diphosphate. Functionally, DNA-dependent RNA polymerase catalyzes the transcription of DNA into RNA using the four ribonucleoside triphosphates as substrates. This Trieres chinensis (Marine centric diatom) protein is DNA-directed RNA polymerase subunit alpha.